Consider the following 942-residue polypeptide: Sucrose synthase 6 (942 aa).

A GT-B glycosyltransferase region spans residues 281–759 (TVFNVVIFSV…GLKRIYECYT (479 aa)). The interval 830–862 (TTNLGAGSKQKEVTETEKTKQKSKDGQEQHDVK) is disordered. Basic and acidic residues predominate over residues 838–862 (KQKEVTETEKTKQKSKDGQEQHDVK).

It belongs to the glycosyltransferase 1 family. Plant sucrose synthase subfamily. Detected in the whole plant but more precisely confined to the vasculature in cotyledons, leaves, petals, anthers and roots.

The protein resides in the secreted. It localises to the cell wall. It catalyses the reaction an NDP-alpha-D-glucose + D-fructose = a ribonucleoside 5'-diphosphate + sucrose + H(+). Sucrose-cleaving enzyme that provides UDP-glucose and fructose for various metabolic pathways. Functions in callose synthesis at the site of phloem sieve elements. The protein is Sucrose synthase 6 (SUS6) of Arabidopsis thaliana (Mouse-ear cress).